The sequence spans 136 residues: Heme-binding protein Rv0203 (136 aa).

Residues 1-27 form the signal peptide; that stretch reads MKTGTATTRRRLLAVLIALALPGAAVA. Cysteines 41 and 115 form a disulfide. Heme-binding residues include tyrosine 60, histidine 64, and histidine 90.

Dimer of dimers.

It is found in the secreted. Part of a heme-iron acquisition system. Acts by binding heme and delivering it to the membrane proteins MmpL3 and MmpL11. Can use free heme or heme from host hemoglobin. The sequence is that of Heme-binding protein Rv0203 from Mycobacterium tuberculosis (strain ATCC 25618 / H37Rv).